The sequence spans 288 residues: Glucose-1-phosphate thymidylyltransferase (288 aa).

Residues D108 and D223 each contribute to the Mg(2+) site.

The protein belongs to the glucose-1-phosphate thymidylyltransferase family. Homotetramer. Requires Mg(2+) as cofactor.

It carries out the reaction dTTP + alpha-D-glucose 1-phosphate + H(+) = dTDP-alpha-D-glucose + diphosphate. Its function is as follows. Catalyzes the formation of dTDP-glucose, from dTTP and glucose 1-phosphate, as well as its pyrophosphorolysis. The chain is Glucose-1-phosphate thymidylyltransferase (rmlA) from Neisseria gonorrhoeae.